A 98-amino-acid chain; its full sequence is Large ribosomal subunit protein bL28 (98 aa).

This sequence belongs to the bacterial ribosomal protein bL28 family.

The polypeptide is Large ribosomal subunit protein bL28 (Thermus thermophilus (strain ATCC BAA-163 / DSM 7039 / HB27)).